Reading from the N-terminus, the 322-residue chain is Heterogeneous nuclear ribonucleoprotein D-like (322 aa).

The tract at residues 1-36 (MTGTARSALPLPQSPARALRPSGAARAAPSLSPSRF) is disordered. R6 carries the omega-N-methylarginine modification. Over residues 14–36 (SPARALRPSGAARAAPSLSPSRF) the composition is skewed to low complexity. RRM domains follow at residues 51–133 (NKMF…KGKE) and 136–215 (KKVF…QPKE). Position 64 is an N6-methyllysine (K64). K112 participates in a covalent cross-link: Glycyl lysine isopeptide (Lys-Gly) (interchain with G-Cter in SUMO2). N6-acetyllysine is present on K119. S144 carries the phosphoserine modification. 2 disordered regions span residues 216–251 (VYRQQQQQQKGGRGAAAGGRGGARGRGRGQGQNWNQ) and 299–322 (SGQQSTYGKASRGGGNHQNNYQPY). The span at 226–245 (GGRGAAAGGRGGARGRGRGQ) shows a compositional bias: gly residues. Residues 245–322 (QGQNWNQGFN…GNHQNNYQPY (78 aa)) are necessary for interaction with TNPO1. Dimethylated arginine; alternate is present on R310. R310 is subject to Omega-N-methylarginine; alternate.

Interacts with TNPO1 and ZNF148. Dimethylation of Arg-310 is probably of the asymmetric type.

It is found in the nucleus. The protein resides in the cytoplasm. Functionally, acts as a transcriptional regulator. Promotes transcription repression. Promotes transcription activation in differentiated myotubes. Binds to double- and single-stranded DNA sequences. Binds to the transcription suppressor CATR sequence of the COX5B promoter. Binds with high affinity to RNA molecules that contain AU-rich elements (AREs) found within the 3'-UTR of many proto-oncogenes and cytokine mRNAs. Binds both to nuclear and cytoplasmic poly(A) mRNAs. Binds to poly(G) and poly(A), but not to poly(U) or poly(C) RNA homopolymers. Binds to the 5'-ACUAGC-3' RNA consensus sequence. The protein is Heterogeneous nuclear ribonucleoprotein D-like (Hnrnpdl) of Rattus norvegicus (Rat).